Consider the following 688-residue polypeptide: Polyribonucleotide nucleotidyltransferase (688 aa).

Residues Asp484 and Asp490 each contribute to the Mg(2+) site. The 60-residue stretch at 550-609 folds into the KH domain; sequence PTTEIFNVAPDKIVEIIGQGGRVIKEIVEKFEVKIDLNKPSGEVKIMGNKERVLKTKEFI. Residues 626 to 688 enclose the S1 motif domain; the sequence is DEVLEAQVKR…NKGKIALDLA (63 aa).

It belongs to the polyribonucleotide nucleotidyltransferase family. Mg(2+) serves as cofactor.

The protein localises to the cytoplasm. It carries out the reaction RNA(n+1) + phosphate = RNA(n) + a ribonucleoside 5'-diphosphate. Its function is as follows. Involved in mRNA degradation. Catalyzes the phosphorolysis of single-stranded polyribonucleotides processively in the 3'- to 5'-direction. The chain is Polyribonucleotide nucleotidyltransferase from Helicobacter pylori (strain G27).